The chain runs to 959 residues: Isoleucine--tRNA ligase (959 aa).

The short motif at 60–70 is the 'HIGH' region element; sequence PYANGSLHIGH. Glu571 lines the L-isoleucyl-5'-AMP pocket. A 'KMSKS' region motif is present at residues 612 to 616; it reads KMSKS. Lys615 provides a ligand contact to ATP. 4 residues coordinate Zn(2+): Cys928, Cys931, Cys948, and Cys951.

This sequence belongs to the class-I aminoacyl-tRNA synthetase family. IleS type 1 subfamily. Monomer. Zn(2+) serves as cofactor.

It localises to the cytoplasm. It catalyses the reaction tRNA(Ile) + L-isoleucine + ATP = L-isoleucyl-tRNA(Ile) + AMP + diphosphate. Its function is as follows. Catalyzes the attachment of isoleucine to tRNA(Ile). As IleRS can inadvertently accommodate and process structurally similar amino acids such as valine, to avoid such errors it has two additional distinct tRNA(Ile)-dependent editing activities. One activity is designated as 'pretransfer' editing and involves the hydrolysis of activated Val-AMP. The other activity is designated 'posttransfer' editing and involves deacylation of mischarged Val-tRNA(Ile). In Nostoc punctiforme (strain ATCC 29133 / PCC 73102), this protein is Isoleucine--tRNA ligase.